Here is a 186-residue protein sequence, read N- to C-terminus: MARKKKTRRITDIMPIRKADKKIDITKARSGKKLTCYELDAKAREDKKKRKHKGLASGSRHSAVEEKANKLQNEIKDPKIGSKKKIPLVVEFVNKPEKGQVIPVIKQVKKQDPMKELENLENNEILNELLDALDAGKTISKSDQQFVDECLDRISELMEELGIEDEDESEDDLYRTFERMDINQFR.

A disordered region spans residues 42–77 (KAREDKKKRKHKGLASGSRHSAVEEKANKLQNEIKD). Basic and acidic residues predominate over residues 62-77 (SAVEEKANKLQNEIKD).

The protein belongs to the YihI family. As to quaternary structure, interacts with Der.

In terms of biological role, a GTPase-activating protein (GAP) that modifies Der/EngA GTPase function. May play a role in ribosome biogenesis. The sequence is that of Der GTPase-activating protein YihI from Haemophilus influenzae (strain ATCC 51907 / DSM 11121 / KW20 / Rd).